The primary structure comprises 582 residues: Proline--tRNA ligase (582 aa).

This sequence belongs to the class-II aminoacyl-tRNA synthetase family. ProS type 1 subfamily. As to quaternary structure, homodimer.

It localises to the cytoplasm. It carries out the reaction tRNA(Pro) + L-proline + ATP = L-prolyl-tRNA(Pro) + AMP + diphosphate. Functionally, catalyzes the attachment of proline to tRNA(Pro) in a two-step reaction: proline is first activated by ATP to form Pro-AMP and then transferred to the acceptor end of tRNA(Pro). As ProRS can inadvertently accommodate and process non-cognate amino acids such as alanine and cysteine, to avoid such errors it has two additional distinct editing activities against alanine. One activity is designated as 'pretransfer' editing and involves the tRNA(Pro)-independent hydrolysis of activated Ala-AMP. The other activity is designated 'posttransfer' editing and involves deacylation of mischarged Ala-tRNA(Pro). The misacylated Cys-tRNA(Pro) is not edited by ProRS. This is Proline--tRNA ligase from Mycolicibacterium paratuberculosis (strain ATCC BAA-968 / K-10) (Mycobacterium paratuberculosis).